Reading from the N-terminus, the 577-residue chain is 2-succinyl-5-enolpyruvyl-6-hydroxy-3-cyclohexene-1-carboxylate synthase (577 aa).

It belongs to the TPP enzyme family. MenD subfamily. Homodimer. Requires Mg(2+) as cofactor. Mn(2+) is required as a cofactor. The cofactor is thiamine diphosphate.

The catalysed reaction is isochorismate + 2-oxoglutarate + H(+) = 5-enolpyruvoyl-6-hydroxy-2-succinyl-cyclohex-3-ene-1-carboxylate + CO2. Its pathway is quinol/quinone metabolism; 1,4-dihydroxy-2-naphthoate biosynthesis; 1,4-dihydroxy-2-naphthoate from chorismate: step 2/7. It functions in the pathway quinol/quinone metabolism; menaquinone biosynthesis. Functionally, catalyzes the thiamine diphosphate-dependent decarboxylation of 2-oxoglutarate and the subsequent addition of the resulting succinic semialdehyde-thiamine pyrophosphate anion to isochorismate to yield 2-succinyl-5-enolpyruvyl-6-hydroxy-3-cyclohexene-1-carboxylate (SEPHCHC). This chain is 2-succinyl-5-enolpyruvyl-6-hydroxy-3-cyclohexene-1-carboxylate synthase, found in Enterococcus faecalis (strain ATCC 700802 / V583).